The sequence spans 545 residues: Chaperonin GroEL (545 aa).

ATP is bound by residues 30 to 33 (TLGP), lysine 51, 87 to 91 (DGTTT), glycine 415, and aspartate 496.

This sequence belongs to the chaperonin (HSP60) family. Forms a cylinder of 14 subunits composed of two heptameric rings stacked back-to-back. Interacts with the co-chaperonin GroES.

It is found in the cytoplasm. It carries out the reaction ATP + H2O + a folded polypeptide = ADP + phosphate + an unfolded polypeptide.. In terms of biological role, together with its co-chaperonin GroES, plays an essential role in assisting protein folding. The GroEL-GroES system forms a nano-cage that allows encapsulation of the non-native substrate proteins and provides a physical environment optimized to promote and accelerate protein folding. The chain is Chaperonin GroEL from Rhodobacter capsulatus (Rhodopseudomonas capsulata).